Consider the following 265-residue polypeptide: Inositol monophosphatase 2 (265 aa).

Mg(2+) contacts are provided by glutamate 65, aspartate 86, leucine 88, and aspartate 89. Glutamate 65 contacts substrate. Residues 88-91 (LDGT), 189-191 (GSC), glutamate 208, and aspartate 216 contribute to the substrate site. Aspartate 216 contacts Mg(2+).

This sequence belongs to the inositol monophosphatase superfamily. The cofactor is Mg(2+). Low expression in roots, stems, leaves, flowers and young and mature green fruits. Expressed in the stem/leaf junctions, below the shoot apex and on the abaxial side of the petiole of the first expanded leaflets.

It carries out the reaction a myo-inositol phosphate + H2O = myo-inositol + phosphate. It functions in the pathway polyol metabolism; myo-inositol biosynthesis; myo-inositol from D-glucose 6-phosphate: step 2/2. Its function is as follows. Responsible for the provision of inositol required for synthesis of phosphatidylinositol and polyphosphoinositides. The polypeptide is Inositol monophosphatase 2 (IMP2) (Solanum lycopersicum (Tomato)).